The primary structure comprises 299 residues: Recombination-associated protein RdgC (299 aa).

The protein belongs to the RdgC family.

The protein localises to the cytoplasm. The protein resides in the nucleoid. Its function is as follows. May be involved in recombination. The polypeptide is Recombination-associated protein RdgC (Laribacter hongkongensis (strain HLHK9)).